We begin with the raw amino-acid sequence, 452 residues long: tRNA modification GTPase MnmE (452 aa).

The (6S)-5-formyl-5,6,7,8-tetrahydrofolate site is built by Arg-24, Glu-81, and Lys-120. Residues 217-373 (GIKTAIVGKT…LIMKIEQMHI (157 aa)) enclose the TrmE-type G domain. Residue Asn-227 participates in K(+) binding. GTP contacts are provided by residues 227-232 (NVGKSS), 246-252 (TDIHGTT), and 271-274 (DTAG). Mg(2+) is bound at residue Ser-231. The K(+) site is built by Thr-246, Ile-248, and Thr-251. A Mg(2+)-binding site is contributed by Thr-252. Lys-452 contributes to the (6S)-5-formyl-5,6,7,8-tetrahydrofolate binding site.

Belongs to the TRAFAC class TrmE-Era-EngA-EngB-Septin-like GTPase superfamily. TrmE GTPase family. As to quaternary structure, homodimer. Heterotetramer of two MnmE and two MnmG subunits. Requires K(+) as cofactor.

It is found in the cytoplasm. Exhibits a very high intrinsic GTPase hydrolysis rate. Involved in the addition of a carboxymethylaminomethyl (cmnm) group at the wobble position (U34) of certain tRNAs, forming tRNA-cmnm(5)s(2)U34. The polypeptide is tRNA modification GTPase MnmE (Mesoplasma florum (strain ATCC 33453 / NBRC 100688 / NCTC 11704 / L1) (Acholeplasma florum)).